The sequence spans 160 residues: Transcriptional repressor NrdR (160 aa).

The segment covering 1-11 (MRCPSCNSLDT) has biased composition (polar residues). The interval 1-20 (MRCPSCNSLDTQVKDSRPTE) is disordered. A zinc finger lies at 3–34 (CPSCNSLDTQVKDSRPTEDSAVIRRRRVCMAC). The ATP-cone domain occupies 49–139 (LTVIKRNGRR…VYRNFREAKD (91 aa)).

The protein belongs to the NrdR family. Requires Zn(2+) as cofactor.

Functionally, negatively regulates transcription of bacterial ribonucleotide reductase nrd genes and operons by binding to NrdR-boxes. In Nitrobacter winogradskyi (strain ATCC 25391 / DSM 10237 / CIP 104748 / NCIMB 11846 / Nb-255), this protein is Transcriptional repressor NrdR.